The following is an 862-amino-acid chain: Linoleate 9S-lipoxygenase 1 (862 aa).

The PLAT domain occupies 44 to 171; the sequence is FGAATDIVGG…SYKRDRIFFA (128 aa). Residues 174-862 form the Lipoxygenase domain; that stretch reads TYLPNETPAS…FRGIPNSISI (689 aa). Residues 225–257 form a disordered region; that stretch reads KNLARTTLGGSSDFPYPRRGRTGRKSTRKDPKC. Residues 242 to 251 are compositionally biased toward basic residues; sequence RRGRTGRKST. Residues His522, His527, His713, Asn717, and Ile862 each coordinate Fe cation.

Belongs to the lipoxygenase family. Monomer. Fe cation is required as a cofactor.

The protein localises to the cytoplasm. The enzyme catalyses (9Z,12Z)-octadecadienoate + O2 = (13S)-hydroperoxy-(9Z,11E)-octadecadienoate. It carries out the reaction (9Z,12Z,15Z)-octadecatrienoate + O2 = (13S)-hydroperoxy-(9Z,11E,15Z)-octadecatrienoate. The catalysed reaction is (9Z,12Z)-octadecadienoate + O2 = (9S)-hydroperoxy-(10E,12Z)-octadecadienoate. It functions in the pathway lipid metabolism; oxylipin biosynthesis. In terms of biological role, plant lipoxygenase may be involved in a number of diverse aspects of plant physiology including growth and development, pest resistance, and senescence or responses to wounding. It catalyzes the hydroperoxidation of lipids containing a cis,cis-1,4-pentadiene structure. The sequence is that of Linoleate 9S-lipoxygenase 1 (LOXA) from Phaseolus vulgaris (Kidney bean).